The primary structure comprises 302 residues: uncharacterized protein (302 aa).

3 disordered regions span residues 15-34 (RHST…RFHK), 143-195 (GMPL…PSHL), and 221-246 (GSEA…RESV). Over residues 172-189 (HSDENKATGQGRENRDQP) the composition is skewed to basic and acidic residues.

This is an uncharacterized protein from Homo sapiens (Human).